The following is a 368-amino-acid chain: Queuine tRNA-ribosyltransferase (368 aa).

The active-site Proton acceptor is aspartate 89. Residues 89–93 (DSGGF), aspartate 143, and glycine 216 each bind substrate. The segment at 247–253 (GVGKPED) is RNA binding. Catalysis depends on aspartate 266, which acts as the Nucleophile. The tract at residues 271-275 (TRNAR) is RNA binding; important for wobble base 34 recognition. Positions 304, 306, 309, and 335 each coordinate Zn(2+).

This sequence belongs to the queuine tRNA-ribosyltransferase family. As to quaternary structure, homodimer. Within each dimer, one monomer is responsible for RNA recognition and catalysis, while the other monomer binds to the replacement base PreQ1. Zn(2+) serves as cofactor.

The enzyme catalyses 7-aminomethyl-7-carbaguanine + guanosine(34) in tRNA = 7-aminomethyl-7-carbaguanosine(34) in tRNA + guanine. It functions in the pathway tRNA modification; tRNA-queuosine biosynthesis. Functionally, catalyzes the base-exchange of a guanine (G) residue with the queuine precursor 7-aminomethyl-7-deazaguanine (PreQ1) at position 34 (anticodon wobble position) in tRNAs with GU(N) anticodons (tRNA-Asp, -Asn, -His and -Tyr). Catalysis occurs through a double-displacement mechanism. The nucleophile active site attacks the C1' of nucleotide 34 to detach the guanine base from the RNA, forming a covalent enzyme-RNA intermediate. The proton acceptor active site deprotonates the incoming PreQ1, allowing a nucleophilic attack on the C1' of the ribose to form the product. After dissociation, two additional enzymatic reactions on the tRNA convert PreQ1 to queuine (Q), resulting in the hypermodified nucleoside queuosine (7-(((4,5-cis-dihydroxy-2-cyclopenten-1-yl)amino)methyl)-7-deazaguanosine). The protein is Queuine tRNA-ribosyltransferase of Buchnera aphidicola subsp. Schizaphis graminum (strain Sg).